The chain runs to 365 residues: MWVPSRRHLCLTFLLVCVLAAIFFLNVYQDLFYSGLDLLALCPDHNVVSSPVAIFCLAGTPVHPNASDSCPKHPASLSGTWTIYPDGRFGNQMGQYATLLALAQLNGRQAFIQPAMHAVLAPVFRITLPVLAPEVDRHAPWRELELHDWMSEDYAHLKEPWLKLTGFPCSWTFFHHLREQIRSEFTLHDHLRQEAQGVLSQFRLPRTGDRPSTFVGVHVRRGDYLRVMPKRWKGVVGDGAYLQQAMDWFRARYEAPVFVVTSNGMEWCRKNIDTSRGDVIFAGDGREAAPARDFALLVQCNHTIMTIGTFGFWAAYLAGGDTIYLANFTLPTSSFLKIFKPEAAFLPEWVGINADLSPLQMLAGP.

Topologically, residues 1–8 (MWVPSRRH) are cytoplasmic. A helical; Signal-anchor for type II membrane protein membrane pass occupies residues 9-28 (LCLTFLLVCVLAAIFFLNVY). The Lumenal segment spans residues 29–365 (QDLFYSGLDL…LSPLQMLAGP (337 aa)). 3 N-linked (GlcNAc...) asparagine glycosylation sites follow: Asn-65, Asn-301, and Asn-327.

This sequence belongs to the glycosyltransferase 11 family.

Its subcellular location is the golgi apparatus. It localises to the golgi stack membrane. The enzyme catalyses a beta-D-galactosyl-(1-&gt;4)-N-acetyl-beta-D-glucosaminyl derivative + GDP-beta-L-fucose = an alpha-L-Fuc-(1-&gt;2)-beta-D-Gal-(1-&gt;4)-beta-D-GlcNAc derivative + GDP + H(+). It carries out the reaction a ganglioside GA1 + GDP-beta-L-fucose = a ganglioside Fuc-GA1 + GDP + H(+). The catalysed reaction is a beta-D-Gal-(1-&gt;3)-beta-D-GlcNAc-(1-&gt;3)-beta-D-Gal-(1-&gt;4)-beta-D-Glc-(1&lt;-&gt;1')-Cer(d18:1(4E)) + GDP-beta-L-fucose = alpha-L-fucosyl-(1-&gt;2)- beta-D-galactosyl-(1-&gt;3)-N-acetyl-beta-D-glucosaminyl-(1-&gt;3)-beta-D-galactosyl-(1-&gt;4)-beta-D-glucosyl-(1&lt;-&gt;1')-N-acylsphing-4-enine + GDP + H(+). It catalyses the reaction a neolactoside nLc4Cer(d18:1(4E)) + GDP-beta-L-fucose = a neolactoside IV(2)-alpha-Fuc-nLc4Cer(d18:1(4E)) + GDP + H(+). The enzyme catalyses a ganglioside GM1 + GDP-beta-L-fucose = a ganglioside Fuc-GM1 + GDP + H(+). It carries out the reaction beta-D-galactosyl-(1-&gt;3)-N-acetyl-D-galactosamine + GDP-beta-L-fucose = alpha-L-fucosyl-(1-&gt;2)-beta-D-galactosyl-(1-&gt;3)-N-acetyl-D-galactosamine + GDP + H(+). It functions in the pathway protein modification; protein glycosylation. Functionally, catalyzes the transfer of L-fucose, from a guanosine diphosphate-beta-L-fucose, to the terminal galactose residue of glycoconjugates through an alpha(1,2) linkage leading to H antigen synthesis that is an intermediate substrate in the synthesis of ABO blood group antigens. H antigen is essential for maturation of the glomerular layer of the main olfactory bulb, in cell migration and early cell-cell contacts during tumor associated angiogenesis. Preferentially fucosylates soluble lactose and to a lesser extent fucosylates glycolipids gangliosides GA1 and GM1a. In Sus scrofa (Pig), this protein is Galactoside alpha-(1,2)-fucosyltransferase 1.